The sequence spans 118 residues: Small ribosomal subunit protein uS13 (118 aa).

A disordered region spans residues 94 to 118 (SLPLRGQRTKTNARTRKGPRKPIRK).

This sequence belongs to the universal ribosomal protein uS13 family. As to quaternary structure, part of the 30S ribosomal subunit. Forms a loose heterodimer with protein S19. Forms two bridges to the 50S subunit in the 70S ribosome.

Located at the top of the head of the 30S subunit, it contacts several helices of the 16S rRNA. In the 70S ribosome it contacts the 23S rRNA (bridge B1a) and protein L5 of the 50S subunit (bridge B1b), connecting the 2 subunits; these bridges are implicated in subunit movement. Contacts the tRNAs in the A and P-sites. The polypeptide is Small ribosomal subunit protein uS13 (Shewanella baltica (strain OS223)).